We begin with the raw amino-acid sequence, 628 residues long: E3 SUMO-protein ligase PIAS3 (628 aa).

Positions Met-1 to Ser-200 are interaction with CCAR2. An SAP domain is found at Val-11–Leu-45. An LXXLL motif motif is present at residues Leu-19–Leu-23. Residues Lys-46, Lys-56, Lys-230, and Lys-307 each participate in a glycyl lysine isopeptide (Lys-Gly) (interchain with G-Cter in SUMO2) cross-link. Residues Met-115–Leu-280 form the PINIT domain. Residues Pro-312–Asp-393 form an SP-RING-type zinc finger. 4 residues coordinate Zn(2+): Cys-343, His-345, Cys-366, and Cys-369. The tract at residues Leu-450–Asp-460 is SUMO1-binding. Residues Lys-466 and Lys-482 each participate in a glycyl lysine isopeptide (Lys-Gly) (interchain with G-Cter in SUMO2) cross-link. The tract at residues Gly-571–Asp-628 is disordered.

It belongs to the PIAS family. As to quaternary structure, monomer. Interacts with PLAG1 and ZFHX3. Interacts with STAT5A; the interaction occurs on stimulation by PRL. Binds SUMO1 and UBE2I. Interacts with AR, BCL11A, HMGA2, IRF1 and NCOA2. Interacts with MITF; the interaction inhibits the transcriptional activity of MITF. Interacts with STAT3; the interaction occurs on stimulation by IL6, CNTF or OSM and inhibits the DNA binding activity of STAT3. Interacts with GFI1; the interaction relieves the inhibitory effect of PIAS3 on STAT3-mediated transcriptional activity. Interacts with MTA1. Interacts with CCAR2 (via N-terminus). Interacts with TRIM8. Interacts with PRDM1. In terms of processing, sumoylated. Expressed in kidney, heart, spleen, brain and cerebellum; weak expression, if any, in liver and lung.

The protein localises to the cytoplasm. The protein resides in the nucleus. It is found in the nucleus speckle. The protein operates within protein modification; protein sumoylation. In terms of biological role, functions as an E3-type small ubiquitin-like modifier (SUMO) ligase, stabilizing the interaction between UBE2I and the substrate, and as a SUMO-tethering factor. Plays a crucial role as a transcriptional coregulation in various cellular pathways, including the STAT pathway and the steroid hormone signaling pathway. Repressor of STAT3 signaling via inhibiting STAT3 DNA-binding and suppressing cell growth. Repressor of MITF transcriptional activity. Enhances the sumoylation of MTA1 and may participate in its paralog-selective sumoylation. Sumoylates CCAR2 which promotes its interaction with SIRT1. Diminishes the sumoylation of ZFHX3 by preventing the colocalization of ZFHX3 with SUMO1 in the nucleus. This Mus musculus (Mouse) protein is E3 SUMO-protein ligase PIAS3 (Pias3).